The primary structure comprises 470 residues: Phosphoribosylamine--glycine ligase (470 aa).

One can recognise an ATP-grasp domain in the interval Lys-115 to Glu-354. Residue Arg-142–Ala-203 participates in ATP binding. Mg(2+)-binding residues include Glu-324 and Asn-326.

Belongs to the GARS family. Mg(2+) serves as cofactor. Mn(2+) is required as a cofactor.

The enzyme catalyses 5-phospho-beta-D-ribosylamine + glycine + ATP = N(1)-(5-phospho-beta-D-ribosyl)glycinamide + ADP + phosphate + H(+). Its pathway is purine metabolism; IMP biosynthesis via de novo pathway; N(1)-(5-phospho-D-ribosyl)glycinamide from 5-phospho-alpha-D-ribose 1-diphosphate: step 2/2. The sequence is that of Phosphoribosylamine--glycine ligase (purD) from Archaeoglobus fulgidus (strain ATCC 49558 / DSM 4304 / JCM 9628 / NBRC 100126 / VC-16).